Reading from the N-terminus, the 205-residue chain is NADH-quinone oxidoreductase subunit C (205 aa).

The protein belongs to the complex I 30 kDa subunit family. As to quaternary structure, NDH-1 is composed of 14 different subunits. Subunits NuoB, C, D, E, F, and G constitute the peripheral sector of the complex.

The protein resides in the cell inner membrane. It catalyses the reaction a quinone + NADH + 5 H(+)(in) = a quinol + NAD(+) + 4 H(+)(out). Functionally, NDH-1 shuttles electrons from NADH, via FMN and iron-sulfur (Fe-S) centers, to quinones in the respiratory chain. The immediate electron acceptor for the enzyme in this species is believed to be ubiquinone. Couples the redox reaction to proton translocation (for every two electrons transferred, four hydrogen ions are translocated across the cytoplasmic membrane), and thus conserves the redox energy in a proton gradient. This Bartonella bacilliformis (strain ATCC 35685 / KC583 / Herrer 020/F12,63) protein is NADH-quinone oxidoreductase subunit C.